The following is a 283-amino-acid chain: Pantothenate synthetase (283 aa).

Position 30–37 (30–37 (MGALHEGH)) interacts with ATP. The active-site Proton donor is His37. Gln61 is a binding site for (R)-pantoate. Gln61 is a beta-alanine binding site. An ATP-binding site is contributed by 147 to 150 (GEKD). Gln153 contacts (R)-pantoate. ATP is bound by residues Val176 and 184–187 (VSSR).

The protein belongs to the pantothenate synthetase family. Homodimer.

It localises to the cytoplasm. It carries out the reaction (R)-pantoate + beta-alanine + ATP = (R)-pantothenate + AMP + diphosphate + H(+). It functions in the pathway cofactor biosynthesis; (R)-pantothenate biosynthesis; (R)-pantothenate from (R)-pantoate and beta-alanine: step 1/1. Functionally, catalyzes the condensation of pantoate with beta-alanine in an ATP-dependent reaction via a pantoyl-adenylate intermediate. This is Pantothenate synthetase from Chlorobium luteolum (strain DSM 273 / BCRC 81028 / 2530) (Pelodictyon luteolum).